The chain runs to 218 residues: Putative inactive cathepsin L-like protein CTSL3P (218 aa).

Disordered stretches follow at residues Gly144–Gln173 and Gly195–Val218. The segment covering Glu201–Leu212 has biased composition (basic and acidic residues).

Belongs to the peptidase C1 family.

This Homo sapiens (Human) protein is Putative inactive cathepsin L-like protein CTSL3P (CTSL3P).